We begin with the raw amino-acid sequence, 287 residues long: Large ribosomal subunit protein uL2 (287 aa).

2 disordered regions span residues 1 to 30 and 211 to 287; these read MGIR…DQPE and NRWK…GRQS. Over residues 12–22 the composition is skewed to polar residues; sequence GTRQKSVSDFS. 2 stretches are compositionally biased toward basic residues: residues 211–220 and 258–287; these read NRWKGRRPKV and KTRK…GRQS.

The protein belongs to the universal ribosomal protein uL2 family. In terms of assembly, part of the 50S ribosomal subunit. Forms a bridge to the 30S subunit in the 70S ribosome.

Its function is as follows. One of the primary rRNA binding proteins. Required for association of the 30S and 50S subunits to form the 70S ribosome, for tRNA binding and peptide bond formation. It has been suggested to have peptidyltransferase activity; this is somewhat controversial. Makes several contacts with the 16S rRNA in the 70S ribosome. This chain is Large ribosomal subunit protein uL2, found in Cyanothece sp. (strain PCC 7425 / ATCC 29141).